The sequence spans 411 residues: UPF0261 protein SACE_5696 (411 aa).

This sequence belongs to the UPF0261 family.

The polypeptide is UPF0261 protein SACE_5696 (Saccharopolyspora erythraea (strain ATCC 11635 / DSM 40517 / JCM 4748 / NBRC 13426 / NCIMB 8594 / NRRL 2338)).